Consider the following 800-residue polypeptide: DNA mismatch repair protein MutS (800 aa).

An ATP-binding site is contributed by 616–623; the sequence is GPNMGGKS.

This sequence belongs to the DNA mismatch repair MutS family.

In terms of biological role, this protein is involved in the repair of mismatches in DNA. It is possible that it carries out the mismatch recognition step. This protein has a weak ATPase activity. This Buchnera aphidicola subsp. Baizongia pistaciae (strain Bp) protein is DNA mismatch repair protein MutS.